The chain runs to 101 residues: NAD(P)H-quinone oxidoreductase subunit 4L, chloroplastic (101 aa).

3 helical membrane-spanning segments follow: residues 2–22 (MLEH…YGLI), 27–46 (MVRA…MNLI), and 61–81 (IFSI…PAIV).

It belongs to the complex I subunit 4L family. NDH is composed of at least 16 different subunits, 5 of which are encoded in the nucleus.

It localises to the plastid. It is found in the chloroplast thylakoid membrane. The enzyme catalyses a plastoquinone + NADH + (n+1) H(+)(in) = a plastoquinol + NAD(+) + n H(+)(out). It carries out the reaction a plastoquinone + NADPH + (n+1) H(+)(in) = a plastoquinol + NADP(+) + n H(+)(out). NDH shuttles electrons from NAD(P)H:plastoquinone, via FMN and iron-sulfur (Fe-S) centers, to quinones in the photosynthetic chain and possibly in a chloroplast respiratory chain. The immediate electron acceptor for the enzyme in this species is believed to be plastoquinone. Couples the redox reaction to proton translocation, and thus conserves the redox energy in a proton gradient. The protein is NAD(P)H-quinone oxidoreductase subunit 4L, chloroplastic of Drimys granadensis.